The primary structure comprises 374 residues: 3-dehydroquinate synthase (374 aa).

This sequence belongs to the archaeal-type DHQ synthase family.

It catalyses the reaction 2-amino-2,3,7-trideoxy-D-lyxo-hept-6-ulosonate + NAD(+) + H2O = 3-dehydroquinate + NH4(+) + NADH + H(+). Its function is as follows. Catalyzes the oxidative deamination and cyclization of 2-amino-3,7-dideoxy-D-threo-hept-6-ulosonic acid (ADH) to yield 3-dehydroquinate (DHQ), which is fed into the canonical shikimic pathway of aromatic amino acid biosynthesis. The protein is 3-dehydroquinate synthase of Methanothermobacter thermautotrophicus (strain ATCC 29096 / DSM 1053 / JCM 10044 / NBRC 100330 / Delta H) (Methanobacterium thermoautotrophicum).